Here is a 397-residue protein sequence, read N- to C-terminus: Elongation factor Tu (397 aa).

In terms of domain architecture, tr-type G spans Leu-10 to Val-207. Residues Gly-19 to Thr-26 are G1. Residue Gly-19 to Thr-26 coordinates GTP. Thr-26 lines the Mg(2+) pocket. The interval Gly-60 to Asn-64 is G2. The G3 stretch occupies residues Asp-81 to Gly-84. GTP-binding positions include Asp-81–His-85 and Asn-136–Asp-139. The tract at residues Asn-136 to Asp-139 is G4. A G5 region spans residues Ser-174 to Arg-176.

Belongs to the TRAFAC class translation factor GTPase superfamily. Classic translation factor GTPase family. EF-Tu/EF-1A subfamily. Monomer.

Its subcellular location is the cytoplasm. It catalyses the reaction GTP + H2O = GDP + phosphate + H(+). Functionally, GTP hydrolase that promotes the GTP-dependent binding of aminoacyl-tRNA to the A-site of ribosomes during protein biosynthesis. The protein is Elongation factor Tu of Pseudomonas putida (strain ATCC 700007 / DSM 6899 / JCM 31910 / BCRC 17059 / LMG 24140 / F1).